A 261-amino-acid chain; its full sequence is Glutamate racemase (261 aa).

Substrate contacts are provided by residues 9–10 (DS) and 41–42 (YG). C73 functions as the Proton donor/acceptor in the catalytic mechanism. A substrate-binding site is contributed by 74 to 75 (NT). The Proton donor/acceptor role is filled by C179. 180–181 (TH) serves as a coordination point for substrate.

It belongs to the aspartate/glutamate racemases family.

It catalyses the reaction L-glutamate = D-glutamate. The protein operates within cell wall biogenesis; peptidoglycan biosynthesis. Functionally, provides the (R)-glutamate required for cell wall biosynthesis. The sequence is that of Glutamate racemase from Aliivibrio fischeri (strain MJ11) (Vibrio fischeri).